The following is a 296-amino-acid chain: uncharacterized protein (296 aa).

6 helical membrane-spanning segments follow: residues 1–21 (MVNL…IFDY), 30–50 (LITA…GFWL), 71–91 (FISF…FVLC), 92–112 (LAQL…STLA), 113–133 (IGLA…LVLF), and 142–162 (IEVA…TTIC).

This sequence belongs to the MscS (TC 1.A.23) family.

Its subcellular location is the cell membrane. This is an uncharacterized protein from Synechocystis sp. (strain ATCC 27184 / PCC 6803 / Kazusa).